The primary structure comprises 514 residues: Antiseptic resistance protein (514 aa).

The Cytoplasmic portion of the chain corresponds to 1–23; sequence MISFFTKTTDMMTSKKRWTALVV. The helical transmembrane segment at 24-41 threads the bilayer; it reads LAVSLFVVTMDMTILIMA. The Extracellular portion of the chain corresponds to 42–57; sequence LPELVRELEPSGTQQL. A helical transmembrane segment spans residues 58–75; sequence WIVDIYSLVLAGFIIPLS. Topologically, residues 76-86 are cytoplasmic; the sequence is AFADKWGRKKA. A helical membrane pass occupies residues 87–104; sequence LLTGFALFGLVSLAIFFA. At 105 to 112 the chain is on the extracellular side; that stretch reads ESAEFVIA. The chain crosses the membrane as a helical span at residues 113-130; it reads IRFLLGIAGALIMPTTLS. The Cytoplasmic segment spans residues 131–146; it reads MIRVIFENPKERATAL. A helical transmembrane segment spans residues 147–164; the sequence is AVWSIASSIGAVFGPIIG. The Extracellular segment spans residues 165 to 172; it reads GALLEQFS. A helical transmembrane segment spans residues 173-190; the sequence is WHSAFLINVPFAIIAVVA. The Cytoplasmic portion of the chain corresponds to 191–207; the sequence is GLFLLPESKLSKEKSHS. Residues 208–225 form a helical membrane-spanning segment; that stretch reads WDIPSTILSIAGMIGLVW. Residues 226-237 lie on the Extracellular side of the membrane; sequence SIKEFSKEGLAD. The chain crosses the membrane as a helical span at residues 238–255; the sequence is IIPWVVIVLAITMIVIFV. At 256–278 the chain is on the cytoplasmic side; that stretch reads KRNLSSSDPMLDVRLFKKRSFSA. Residues 279 to 295 traverse the membrane as a helical segment; it reads GTIAAFMTMFAMASVLL. Residues 296–315 lie on the Extracellular side of the membrane; that stretch reads LASQWLQVVEELSPFKAGLY. Residues 316–333 traverse the membrane as a helical segment; the sequence is LLPMAIGDMVFAPIAPGL. Residues 334–341 are Cytoplasmic-facing; sequence AARFGPKI. Residues 342-360 traverse the membrane as a helical segment; it reads VLPSGIGIAAIGMFIMYFF. Residues 361–369 lie on the Extracellular side of the membrane; that stretch reads GHPLSYSTM. The helical transmembrane segment at 370–387 threads the bilayer; the sequence is ALALILVGAGMASLAVAS. Topologically, residues 388–408 are cytoplasmic; sequence ALIMLETPTSKAGNAAAVEES. The helical transmembrane segment at 409 to 426 threads the bilayer; sequence MYDLGNVFGVAVLGSLSS. Topologically, residues 427–481 are extracellular; that stretch reads MLYRVFLDISSFSSKGIVGDLAHVAEESVVGAVEVAKATGIKQLANEAVTSFNDA. The chain crosses the membrane as a helical span at residues 482 to 499; the sequence is FVATALVGGIIMIIISIV. At 500-514 the chain is on the cytoplasmic side; that stretch reads VYLLIPKSLDITKQK.

The protein belongs to the major facilitator superfamily.

The protein resides in the cell membrane. In terms of biological role, confers export-mediated resistance against antiseptic and disinfectant compounds such as intercalating dyes, quaternary ammonium salts and diamidines. In Staphylococcus aureus (strain Mu50 / ATCC 700699), this protein is Antiseptic resistance protein (qacA).